The chain runs to 208 residues: Protein-L-isoaspartate O-methyltransferase (208 aa).

Residue S59 is part of the active site.

It belongs to the methyltransferase superfamily. L-isoaspartyl/D-aspartyl protein methyltransferase family.

It localises to the cytoplasm. It carries out the reaction [protein]-L-isoaspartate + S-adenosyl-L-methionine = [protein]-L-isoaspartate alpha-methyl ester + S-adenosyl-L-homocysteine. Catalyzes the methyl esterification of L-isoaspartyl residues in peptides and proteins that result from spontaneous decomposition of normal L-aspartyl and L-asparaginyl residues. It plays a role in the repair and/or degradation of damaged proteins. This is Protein-L-isoaspartate O-methyltransferase from Pectobacterium carotovorum subsp. carotovorum (strain PC1).